A 167-amino-acid chain; its full sequence is Kininogen-1 (167 aa).

The N-terminal stretch at Met1–Ala23 is a signal peptide.

Belongs to the bradykinin-related peptide family. In terms of tissue distribution, expressed by the skin glands.

The protein localises to the secreted. Vasodilator. Bradykinin produces in vitro relaxation of rat arterial smooth muscle and constriction of intestinal smooth muscle. May target bradykinin receptors (BDKRB). This Bombina orientalis (Oriental fire-bellied toad) protein is Kininogen-1.